The following is a 486-amino-acid chain: Membrane-bound lytic murein transglycosylase F (486 aa).

The first 21 residues, 1 to 21 (MTRIKLNYFVIGVVALLLALA), serve as a signal peptide directing secretion. A non-LT domain region spans residues 22-268 (LWPNIPWRNG…RLEEKYLGHV (247 aa)). The interval 269–486 (GSFDYVDTKT…VVGPGWSINN (218 aa)) is LT domain. Glu-313 is a catalytic residue.

This sequence in the N-terminal section; belongs to the bacterial solute-binding protein 3 family. It in the C-terminal section; belongs to the transglycosylase Slt family.

The protein resides in the cell outer membrane. The enzyme catalyses Exolytic cleavage of the (1-&gt;4)-beta-glycosidic linkage between N-acetylmuramic acid (MurNAc) and N-acetylglucosamine (GlcNAc) residues in peptidoglycan, from either the reducing or the non-reducing ends of the peptidoglycan chains, with concomitant formation of a 1,6-anhydrobond in the MurNAc residue.. Its function is as follows. Murein-degrading enzyme that degrades murein glycan strands and insoluble, high-molecular weight murein sacculi, with the concomitant formation of a 1,6-anhydromuramoyl product. Lytic transglycosylases (LTs) play an integral role in the metabolism of the peptidoglycan (PG) sacculus. Their lytic action creates space within the PG sacculus to allow for its expansion as well as for the insertion of various structures such as secretion systems and flagella. The polypeptide is Membrane-bound lytic murein transglycosylase F (Yersinia enterocolitica serotype O:8 / biotype 1B (strain NCTC 13174 / 8081)).